A 372-amino-acid chain; its full sequence is N-methyl-L-tryptophan oxidase (372 aa).

Position 4–34 (4–34 (DLIIIGSGSVGAAAGYYATRAGLNVLMTDAH)) interacts with FAD. Cys-308 bears the S-8alpha-FAD cysteine mark.

The protein belongs to the MSOX/MTOX family. MTOX subfamily. In terms of assembly, monomer. The cofactor is FAD.

The enzyme catalyses N(alpha)-methyl-L-tryptophan + O2 + H2O = L-tryptophan + formaldehyde + H2O2. In terms of biological role, catalyzes the oxidative demethylation of N-methyl-L-tryptophan. The protein is N-methyl-L-tryptophan oxidase of Escherichia coli O127:H6 (strain E2348/69 / EPEC).